The sequence spans 259 residues: Thiazole synthase (259 aa).

The Schiff-base intermediate with DXP role is filled by Lys95. 1-deoxy-D-xylulose 5-phosphate contacts are provided by residues Gly156, 182–183, and 204–205; these read AG and NT.

Belongs to the ThiG family. In terms of assembly, homotetramer. Forms heterodimers with either ThiH or ThiS.

The protein localises to the cytoplasm. It catalyses the reaction [ThiS sulfur-carrier protein]-C-terminal-Gly-aminoethanethioate + 2-iminoacetate + 1-deoxy-D-xylulose 5-phosphate = [ThiS sulfur-carrier protein]-C-terminal Gly-Gly + 2-[(2R,5Z)-2-carboxy-4-methylthiazol-5(2H)-ylidene]ethyl phosphate + 2 H2O + H(+). The protein operates within cofactor biosynthesis; thiamine diphosphate biosynthesis. Catalyzes the rearrangement of 1-deoxy-D-xylulose 5-phosphate (DXP) to produce the thiazole phosphate moiety of thiamine. Sulfur is provided by the thiocarboxylate moiety of the carrier protein ThiS. In vitro, sulfur can be provided by H(2)S. The protein is Thiazole synthase of Serratia proteamaculans (strain 568).